The primary structure comprises 220 residues: Large ribosomal subunit protein uL16 (220 aa).

This sequence belongs to the universal ribosomal protein uL16 family. As to quaternary structure, component of the small ribosomal subunit. Mature ribosomes consist of a small (40S) and a large (60S) subunit. The 40S subunit contains about 33 different proteins and 1 molecule of RNA (18S). The 60S subunit contains about 49 different proteins and 3 molecules of RNA (25S, 5.8S and 5S).

The protein is Large ribosomal subunit protein uL16 (RPL10) of Zea mays (Maize).